A 284-amino-acid chain; its full sequence is MKIVLISGLSGSGKSVALRQMEDSGYFCVDNLPLEMLPALVSYHIERADETELAVSVDVRSGIDIGQAREQIAYLRGLGHRVEVLFVEAEESVLVRRFSETRRGHPLSNQDMTLLESLKKEREWLFPLKEIAYCIDTSKMNAQQLRHAVRQWLKVERTGLLVILESFGFKYGVPNNADFMFDMRSLPNPYYDPELRPYTGMDKPVWDYLDGQPLVQEMVDDIEKFLTHWLPRLEDESRSYVTVAIGCTGGQHRSVYVVEKLARRLKGRYELLIRHRQAQNLPSR.

Residue 8 to 15 (GLSGSGKS) participates in ATP binding. A GTP-binding site is contributed by 58–61 (DVRS).

It belongs to the RapZ-like family.

Functionally, displays ATPase and GTPase activities. The chain is Nucleotide-binding protein NMCC_0698 from Neisseria meningitidis serogroup C (strain 053442).